The sequence spans 202 residues: MKKIGVFGGTFDPIHIGHIYIAYEAYKILELDEVIFMPAGNPPHKKWKDITDEIIRYEMVKKAIEPYSFFSINNYEIEKKGLSFTYETLRYLHESFKEVELYFITGADCLVNLNSWKNINEIFKFSNLVVFNRPGFDKNNLLKRKEEFDREYCTNIVYLDLLNIEISSTLIRERVRQSLEVKFFLPPGVVDIIDKYNLYRRE.

Belongs to the NadD family.

It carries out the reaction nicotinate beta-D-ribonucleotide + ATP + H(+) = deamido-NAD(+) + diphosphate. The protein operates within cofactor biosynthesis; NAD(+) biosynthesis; deamido-NAD(+) from nicotinate D-ribonucleotide: step 1/1. Catalyzes the reversible adenylation of nicotinate mononucleotide (NaMN) to nicotinic acid adenine dinucleotide (NaAD). This chain is Probable nicotinate-nucleotide adenylyltransferase, found in Clostridium perfringens (strain SM101 / Type A).